The primary structure comprises 94 residues: Translation initiation factor 1A 2 (94 aa).

The S1-like domain occupies 6–80 (GRRNLRMPND…EKANVEWRYS (75 aa)).

The protein belongs to the eIF-1A family.

Its function is as follows. Seems to be required for maximal rate of protein biosynthesis. Enhances ribosome dissociation into subunits and stabilizes the binding of the initiator Met-tRNA(I) to 40 S ribosomal subunits. The polypeptide is Translation initiation factor 1A 2 (eIF1A2) (Halobacterium salinarum (strain ATCC 700922 / JCM 11081 / NRC-1) (Halobacterium halobium)).